The sequence spans 315 residues: Protein LST8 homolog (315 aa).

8 WD repeats span residues 1 to 31 (MGDQ…KTMR), 33 to 71 (VETS…TAPV), 76 to 115 (GVQK…PHCS), 119 to 158 (DCES…HECI), 161 to 200 (EVDA…DQKM), 211 to 250 (AHTR…KWRE), 253 to 292 (IENY…PTRE), and 295 to 315 (GHTK…KVNH).

Belongs to the WD repeat LST8 family.

The protein localises to the cytoplasm. This is Protein LST8 homolog from Drosophila pseudoobscura pseudoobscura (Fruit fly).